An 893-amino-acid polypeptide reads, in one-letter code: MESTMSSASTNASPPSASEKHTPMMQQYLRIKAEHPETLLFYRMGDFYEVFFEDAEKASRLLGITLTQRGSSNGNPIKMAGVPFHAVDQYLSKLVKLGESIALCEQIGDPATSKGPVERKVLRVITPGTLSDSDLLPEKSEQPLLALYSTTQRKTITIGLAWLSMASGALKLMEFTTDARNAATRLKHELERIAPAEVLLPGSIDGPDSDYAFAKNTTVPDWHFDIAHGSKALHEQLKVSTLTGFGAEHLNAAIGAAGALLRYAQATQGKGLQHVRALTVETENEFIGLDAATRRNLELTETIRGQDNNSATLFSLLDHCRTAMGSRLLRHWLHHARRDQAVARARHAAINALMRTDACTGLASTLASVPDVERIATRIALQSARPRDLAGMRGGLQQLPSLRAYVSMCNQDADAPLLKTIHDALATPSECLDLVERAIALEPAAMVRDGGVIARGFDAELDELRGLSENAGQFLVDLETRERTRTGINNLRVEYNKVHGFYIEVTHGQTDKVPDDYRRRQTLKNAERYITPELKAFEDKALSAQERALAREKYLYDQVLQQMAQHIGTLQNIAHALAQLDTLVALAEHALRHNWCAPQLIAEPTIAIEQGRHPVVENHIERFIANDCLLNNESRLLLITGPNMGGKSTYMRQVALITLLAYVGSFVPATSATIGPIDRIFTRIGAADDLAGGRSTFMVEMTESAAILNGATENSLVLMDEVGRGTSTFDGLALAWAIARHLIDSTRSFTLFATHYFELTQLPEVHPSAANVHLSAVEHKDSIVFLHAVQAGPASQSYGLQVAQLAGVPQAVIRAARKHLATLEANSMQATPQFDLFADPDHLIPTSDVETAMAQPSALDEALADINPDALSPRDALDALYRLKELSNQHREK.

The span at 1–17 shows a compositional bias: low complexity; the sequence is MESTMSSASTNASPPSA. The interval 1 to 22 is disordered; the sequence is MESTMSSASTNASPPSASEKHT. 641 to 648 lines the ATP pocket; sequence GPNMGGKS.

This sequence belongs to the DNA mismatch repair MutS family.

This protein is involved in the repair of mismatches in DNA. It is possible that it carries out the mismatch recognition step. This protein has a weak ATPase activity. The protein is DNA mismatch repair protein MutS of Herminiimonas arsenicoxydans.